A 100-amino-acid polypeptide reads, in one-letter code: Urease subunit gamma (100 aa).

It belongs to the urease gamma subunit family. Heterotrimer of UreA (gamma), UreB (beta) and UreC (alpha) subunits. Three heterotrimers associate to form the active enzyme.

It localises to the cytoplasm. It carries out the reaction urea + 2 H2O + H(+) = hydrogencarbonate + 2 NH4(+). The protein operates within nitrogen metabolism; urea degradation; CO(2) and NH(3) from urea (urease route): step 1/1. The polypeptide is Urease subunit gamma (Acinetobacter baumannii (strain AB307-0294)).